The sequence spans 445 residues: Ribosomal protein uS12 methylthiotransferase RimO (445 aa).

The region spanning 4–119 (YKVGMVSLGC…INEAIMNFIN (116 aa)) is the MTTase N-terminal domain. Cysteine 13, cysteine 48, cysteine 82, cysteine 157, cysteine 161, and cysteine 164 together coordinate [4Fe-4S] cluster. The Radical SAM core domain occupies 143–373 (TTDKATAYLR…MLLQKEVSEE (231 aa)). Residues 376 to 441 (KNKVGREYDV…EYDLVGVVCN (66 aa)) enclose the TRAM domain.

It belongs to the methylthiotransferase family. RimO subfamily. It depends on [4Fe-4S] cluster as a cofactor.

The protein resides in the cytoplasm. The enzyme catalyses L-aspartate(89)-[ribosomal protein uS12]-hydrogen + (sulfur carrier)-SH + AH2 + 2 S-adenosyl-L-methionine = 3-methylsulfanyl-L-aspartate(89)-[ribosomal protein uS12]-hydrogen + (sulfur carrier)-H + 5'-deoxyadenosine + L-methionine + A + S-adenosyl-L-homocysteine + 2 H(+). Its function is as follows. Catalyzes the methylthiolation of an aspartic acid residue of ribosomal protein uS12. The protein is Ribosomal protein uS12 methylthiotransferase RimO of Clostridium perfringens (strain 13 / Type A).